Reading from the N-terminus, the 442-residue chain is Histidinol dehydrogenase (442 aa).

Positions 132, 194, and 217 each coordinate NAD(+). The substrate site is built by Ser243, Gln265, and His268. Zn(2+) contacts are provided by Gln265 and His268. Catalysis depends on proton acceptor residues Glu332 and His333. 4 residues coordinate substrate: His333, Asp366, Glu420, and His425. A Zn(2+)-binding site is contributed by Asp366. A Zn(2+)-binding site is contributed by His425.

It belongs to the histidinol dehydrogenase family. Zn(2+) is required as a cofactor.

It carries out the reaction L-histidinol + 2 NAD(+) + H2O = L-histidine + 2 NADH + 3 H(+). It participates in amino-acid biosynthesis; L-histidine biosynthesis; L-histidine from 5-phospho-alpha-D-ribose 1-diphosphate: step 9/9. Catalyzes the sequential NAD-dependent oxidations of L-histidinol to L-histidinaldehyde and then to L-histidine. The polypeptide is Histidinol dehydrogenase (Idiomarina loihiensis (strain ATCC BAA-735 / DSM 15497 / L2-TR)).